Here is a 73-residue protein sequence, read N- to C-terminus: Large ribosomal subunit protein bL31c (73 aa).

Belongs to the bacterial ribosomal protein bL31 family. Type A subfamily. In terms of assembly, part of the 50S ribosomal subunit.

It localises to the plastid. The protein localises to the chloroplast. Functionally, binds the 23S rRNA. The sequence is that of Large ribosomal subunit protein bL31c from Palmaria palmata (Dulse).